A 341-amino-acid polypeptide reads, in one-letter code: Glycerol-3-phosphate dehydrogenase [NAD(P)+] (341 aa).

3 residues coordinate NADPH: Ser-13, Trp-14, and Lys-108. 3 residues coordinate sn-glycerol 3-phosphate: Lys-108, Gly-139, and Ser-141. Ala-143 lines the NADPH pocket. The sn-glycerol 3-phosphate site is built by Lys-194, Asp-247, Ser-257, Arg-258, and Asn-259. The active-site Proton acceptor is Lys-194. Arg-258 serves as a coordination point for NADPH. Positions 282 and 284 each coordinate NADPH.

It belongs to the NAD-dependent glycerol-3-phosphate dehydrogenase family.

It is found in the cytoplasm. It carries out the reaction sn-glycerol 3-phosphate + NAD(+) = dihydroxyacetone phosphate + NADH + H(+). It catalyses the reaction sn-glycerol 3-phosphate + NADP(+) = dihydroxyacetone phosphate + NADPH + H(+). It participates in membrane lipid metabolism; glycerophospholipid metabolism. Its function is as follows. Catalyzes the reduction of the glycolytic intermediate dihydroxyacetone phosphate (DHAP) to sn-glycerol 3-phosphate (G3P), the key precursor for phospholipid synthesis. The polypeptide is Glycerol-3-phosphate dehydrogenase [NAD(P)+] (Lactococcus lactis subsp. lactis (strain IL1403) (Streptococcus lactis)).